Here is an 85-residue protein sequence, read N- to C-terminus: Elongation factor 1-beta (85 aa).

It belongs to the EF-1-beta/EF-1-delta family.

Functionally, promotes the exchange of GDP for GTP in EF-1-alpha/GDP, thus allowing the regeneration of EF-1-alpha/GTP that could then be used to form the ternary complex EF-1-alpha/GTP/AAtRNA. This chain is Elongation factor 1-beta, found in Methanosphaerula palustris (strain ATCC BAA-1556 / DSM 19958 / E1-9c).